A 5112-amino-acid polypeptide reads, in one-letter code: MSRFSCIFPTLTDGYVPNPDHTRAAGRRTYTIDLSGWNGSSGQAESYILAAWGLVLSSYVGTDEVAFYVVPTTGPDTTALAELKVEGDMSRLSLTDAAEQLLHPKHVGAGQISGETANTIITFANDIESLFVTQTEESFLLLHVHRDEKGHISLTLTYYLSLLTDAQAANVCTAMSQALAVVTTDHPERLIKDLNLMSPTHIDHIWKFNANVPGPWEECFHDVVERHAANRPHSLAVDAWDMKLTYAELVREAHLLAAYLQQRGVRPGSVVPISFERSGAALVAMLAVSKAGGAFVSVPPNLPAGRLDAILEVIEAPFVVTWSKYEAFWSERLSTLPIDNYPKPSGDATVESLGKPDDLFYVIFTSGSTGRPKGCMLSHSNWLNGALRNAPSWKYGPESRVLQMLSHTFDMSLLEICTSLGSGACVCVPCTEEIETSVSDAINRWQVNHVIMTPSLARALKPDDVPGLKTMCLGGEAFPKEIVTMWSERINLWQFYGPSECSINSSSRPITRPDADPLNIGPPNSAACWVVDAQDYNKLVPVGAIGELLVSGPIVGMGYLKNPVKTAEAFLDQVGFVSKDDPQFGGFRFYRTGDHVRWNSDGTITFCGRADTQVKLNGQRLELAEVEYQLGLEDGVQYAIAMSPQTGRCKNNLIAILTVKGTNCSNQRNAADEIPLLDRRDPIIQQTVKKLRSQLQHALPRYMVPTIWAFVGRMPMSASGKIDRVQLRNWVQEMSQETFDAITGRSFEAEDHVLGLSRLEQEIQLAWAEALGLSAAEVGLQQPFVALGGDSIKALDAVARCRTRQIKISMVHILSCEGVREAASLAEVQETPAQQVAEMAVDYSDLWTRLSTEYDLGKLGVTQVEDVEDVFPCTTMQEGMFLGQIRRPGAYHMRFFHRVQLKGGCLPTVDRIQQAWASLIERHPSLRTIFVDDLSPDAIYHSVVLRSVPLELTMREVPRDLSPEDALAMFTDELVPFRPNAPLHRMLLLTCRGRVPYFMLEISHVIMDGYALSVFRREFIQACSSTGPLPRGPDYRMFANYHRTRQTDDSAKYWTNYLSDCVPCHIPTHAVIAPTDAPPEWPRNLQRRDFSFNNSAAFLQRCKERQVTLACAIRAAWALVLRAYTQSQDVCFGYVSSGRNVPVPEVETIFGLCLSMQVCRARLSESSTIASLARKIQEDYVASLPFQHYPLAEAQRGLKQTHGQGLFNTAISMEWVPPTAEDGDALLDLEEIREQDDPTEYDVAISVDIHEGHIKLGFLYWPNLTEFEIAHLAEALQGAMNCFAYQPDDALDSLTLLQASDVCSTLADGPTLLPLEAVRVNMLSMIDRRVTRQPDTPAIEGWDGSLSYKQLHEQSCWVARNLLHQGLQLGDRVLVCADRSSRTVATILGLVRAGCVLVLSNPTDPDKRLHWLAEKCNAALIIADPAYEKRFATAGSRVLLTTAVCSPAAWDYEFPALDEHDLISILFTSGSTGTPKGILMDHGALATSVLLGHGRTLRFSRQTRMLHFASLTFDAALAEIFTTLAHGGCICVPTEEDRLSDVPGCISRFAVNTAMLTPSVGRLLDPTALPMLKSLIMVGEPMSRLDVERFAPVLDLYNGAGPTETSIMVTIAGPMTPTDEPTNLGHSVAGVRLWVTEAEDPNRLAPLGAVGELIVEGRLVTRGYLDDGERTQQAFLPSLPWLPSQHALYRTGDLVRYADDGSLRYMGRKDTQVKLRGQRIELQEVEYHLRKSLQQAQVVVEMVIPEGKTRAQASLVAFVSGLTAADVESSSACNSEESMTISQVVLPKSTIQTLEEALPRHMIPSVYYALETIPLSVNGKADRRRLREMGASLLASSAANKSTADGKKEPAKWTAASELERTLLELWATTLGLEVEAIHGDDSFFELGGDSVSAMKLVATARDKFKLSLSVPQMFRYPTIRQLAAELGESPRSSTSSASSSTEDEFTISTPDDSSTNDGVDDDFLQLATAQLAQLAQEKGKKVDIAALLKQLQGGSSSSKTPSVSSSSSSSSSRKKKSSKAAFPVEAPGPVPEPFSLLNGDADVVEQVRAHAAEQCKIPHEDIEDIYPATALQEGMMALMARTPGVYTTALTCELSSQIDLARLHSAWDKAAEAHPILRTRIIMTDDNTAVQVVQRAKGLPWDRYTLQDGESIPNLTSDMTLGSPLLRLAEIHRHSKPPMLLVAIHHALYDGWSMPLLKQAVEDAYHGQTLQPQPFTPFINYLKEGKRAAQDFWTAHLDGFAGGVFPNLPSIDHHIQPSERRSRSLTIPTAVSRNQYTMATKIQAAWAVTVSRYAEDEDIVFGTVSTGRSAPVPAIDRMVGPTITTVPVRISLGDQAQRVSPLLQRVQEDGWNRMDHEHLGLQYIGRLSESAAAACRLQTLLVIQPREESHANSGATLLSGLQDSAELEGVDTYPLMLVCEPDGASLHLTAVFDPLVLDRTILERMLAHWELVLTQLWTEPDMAVVDLDAVSYSDKQTLVQWNVGEKIADGCAHDAVHEWSIRTPHAPAVCAWDGEWTYEELDKCSSLLASQILEHGVTSGDFVALYHEKSRWVAAGILAVFKAGGILVTLDPAHPKDRIRDILDQTQPRLILTSQSLLGEARELDTPVLCLQFAASQPVPERCSSPPTVSPTQAAYAPFTSGSTGRPKGVPLEHRGLAASTASVSRACLLRPASRVLHFASFAFDASIMEPLVAWHAGGCLCIPDETARQTDLARCIRDFDVTWAFLTPSCLRLITPDDVQCLEALALGGESMTPEDISIWCPRLNQMVQLYGPAECCFVAALTEVTKPSENRLIGRPNACRCWVVNPKSPERLAPLGAIGELMVEGITVGQGYINNPERTTQSFIQPPTWLQALYPDEEQPRHLYRTGDLVRYAGEDGKLTFIGRRDGQVKLHGQRIELADVEAHLRPLIPAKHNIVVEMISSVDNQHPLLAAFVEEPSPSQGPQEQHIGLIHPSEAQYALNVKTIDGALSRTVPQHMIPSMYLHISRLPLSSSGKLNRRQLREMVAQLPRQKLNEYAAGSCEMASQRPTTAKECEMQAIWARVLAADPDTIGLNDDFFRIGGDSISGMQIATKCNAAGMHITSADLFRHRTIAQLLFHLRNAKKRGDAISLPAEPVEEWVDLAPIQQLFFEIAPEGSSHFNQSLLLRTSRHISVEELTAGLDILVKRHSMLRASFRRSESGHWSQQVRSLDSPAGTFYRLATHNGITRESLPSVFTTSQTSLSIQEGPLLAIDLVELTDGSQLLYLVAHHLVIDLVSWRILHGELEQYLQTGSLEPVTESVPFLTWSRAQAEYSAKHLTPVSALPRFQEAHDEFDGARYWGIPPESNTFGQTSTFRFTLDQTATDTLFGTGNNVLGTRPVEILQAALWYSFTQSLTDRPYPSIYVEGHGREPWADSIDISGTVGWFTTMSPLVFAPWDSLSRTSMEDFLDALSYIKDQRRRVPANGWAYFTSRYLNDEGKVAYGRMKPVVEILFNYMGQYQEMTREDAILQLAGDDIQSGTGAADIADDVPRFSLIDVGAFTANGCLSFEFIFPECIQRDARLKLWVENCERMLLSAAKLLSNEGPRKTLSDFPLMPELTYEQLSQCFEHTLPSMGLSASDVVNIYPCSSVQQGMLLAQLRDPQAYQQRFKFHVKSDERRLTLEQVKDAWREVINRHDILRTLLLPVSDHGHLDQVVMAPGSLQHLVRIDATDVNLTQGIPHSINITRDSSGTVVCEWNVSHVLVDAMSVAVIQLEVSQSLDGLLGQHEKPGQYADYIQWVSRRDKTETQAYWQRYLEGVEPCLFPKLTSTSDNVKPEGTISAVRATWDRDARMDELCQKHGITLTNLFHIVWALVLGAYVGTDDVCFGYTTLGRDVPVDGVEMMVGPLVNVLATTVQLRDEDSILDALRTHQAHLTNSLQHQHHALADVYASIGLVGSQLFNTIVSLQDVSHFDAPDEQSTRLEVQPANDASEVCHYLLVYKCFIFFDVNFRKYDVALNIGVGSSSIQLVCSYRTLSLSAEHADTLLRTASHVLSEILRDPTQRIQEIEIISPECKEQLVKWNPTVPAPSDEYIHEKIQGQCRLHSSRQAVCAWDGIFTYAELDDLSSRLAVRLTRMGATSEHIIPIYSPRSRWTVIAILGVLKTGAAFTLLEVSHPMNRLQEVCKQIDASVIIAPASHATSAASLAPILVVLDNITSMTPGQSESSPAVRMPPASEALAYLIFTSGSTGNPKGVMVTHQNLCSNASIMTTSVNMTADSRVLQFASYAFDASLWEMLGALFAGACLVIPSESESKEDLAGCIDRMAVTWAFLTPSVARILKPERVPQLRVLALGGEPIAVSDLDTWRTHAQVVCAYGPSETAILASTTSPSTIPTVGKDIGMPTTCSLWIVDKRDYQKLAPLGATGELLIEGPNVSKGYLGDPEKTNEAFPVAPRWLSQLRQSPTRVYRTGDLVRFDQSTGTLRFVGRKDNQIKFHGQRIELGDIENHAQQALPNASTVIVDLISPGESQQSYLVAFVYQPDTSTQTADAIDPILLPPSESFRTDALAAQKHMHDRLPHYMVPTAFLPLNCLPLSNTGKADRKRLRHCALALSGSELNAYRATATAKRMPSTEAECIMQQLIATVLGRDASEIGMDDSFFHLGGDSVQAMRLVSEGRQQGLTLSLRTIFDSPRLDDLARHNSLVQDDQPAAASPATMHDTFSLIDKLVSTYPIDKAAVVDILPTTSFQRHWLDAQLKSYIVVDIPGRISRDRLFTAMQRVVDAHPILRTSFVPHDNTAVQVILRTAFAITDADLSTTTVEDLCRQDANAAIAPGAPYLRVILATGEFGYKLIMRLSHAQYDAVSLSLLMNDLGHAYENDTHELPSSYSPSFTDYITYQQRQKVDSTATTFWRHLLQDVPLTSLDLQPSKPSTSNGTPITRTRDINIATFPQLPNGITLATAVKAAWSIVLAQKTNSPAVIFGQVVHGRGIPLPGVEGIVGPCANITPVVARLSPQTTGLELLQALQDQHRSGLSYEAVDLDDALAYTKGWQAGSPRVQTIVQHQNNVMTDGMGLSLGEVKCGVDVRAVDHVPREVWVYSSVDENKPGMLEVKIMSSTLVLSEEVAEELMDLVVEKVVALLRDPRGVCV.

The tract at residues 225-616 (ERHAANRPHS…CGRADTQVKL (392 aa)) is adenylation 1. The Carrier 1 domain occupies 757-830 (SRLEQEIQLA…EAASLAEVQE (74 aa)). S791 is modified (O-(pantetheine 4'-phosphoryl)serine). The condensation 1 stretch occupies residues 868-1299 (EDVFPCTTMQ…ALDSLTLLQA (432 aa)). The interval 1327 to 1716 (DRRVTRQPDT…GRKDTQVKLR (390 aa)) is adenylation 2. The Carrier 2 domain occupies 1854-1931 (TAASELERTL…QLAAELGESP (78 aa)). S1891 is subject to O-(pantetheine 4'-phosphoryl)serine. 2 disordered regions span residues 1926–1961 (ELGE…DGVD) and 1994–2034 (GGSS…VPEP). Low complexity-rich tracts occupy residues 1930-1941 (SPRSSTSSASSS) and 1994-2012 (GGSS…SSSS). The interval 2064–2479 (EDIYPATALQ…AVSYSDKQTL (416 aa)) is condensation 2. Residues 2502–2894 (IRTPHAPAVC…IGRRDGQVKL (393 aa)) form an adenylation 3 region. Positions 3030–3106 (RPTTAKECEM…QLLFHLRNAK (77 aa)) constitute a Carrier 3 domain. The residue at position 3067 (S3067) is an O-(pantetheine 4'-phosphoryl)serine. Condensation stretches follow at residues 3122–3586 (WVDL…TYEQ) and 3607–4044 (NIYP…EQLV). The segment at 4069 to 4459 (HSSRQAVCAW…VGRKDNQIKF (391 aa)) is adenylation 4. The Carrier 4 domain maps to 4593-4669 (MPSTEAECIM…DLARHNSLVQ (77 aa)). S4630 is subject to O-(pantetheine 4'-phosphoryl)serine. The condensation 5 stretch occupies residues 4724–5106 (IVVDIPGRIS…VEKVVALLRD (383 aa)).

This sequence belongs to the NRP synthetase family.

It functions in the pathway secondary metabolite biosynthesis. Its function is as follows. Nonribosomal peptide synthetase; part of the gene cluster that mediates the biosynthesis of malformins, cyclic pentapeptides with a disulfide bond between 2 consecutive cysteins, that show potential anti-tumor as well as antimalarial and antitrypanosomal properties. The nonribosomal peptide synthetase mlfA is responsible of the formation of the cyclic pentapeptide. MlfA probably acts iteratively on one amino acid and possesses multiple amino acid specificities since it is involved in the biosynthesis of multiple malformins, including malformin C and malformin A2. Malformin C corresponds to a cyclo[D-Cys-D-Cys-Val-D-Leu-Val] pentapeptide whereas malformin A2 corresponds to a cyclo[D-Cys-D-Cys-Val-D-Leu-Ile] pentapeptide. The malformin biosynthesis clusters in malformin-producing fungi also contain enzymes involved in the formation of the disulfide bond between the two consecutive cysteins within malformins, in addition to additional tailoring enzymes such as methyltransferases or oxidoreductases. They are also composed of up to 4 major facilitator superfamily transporters, and transcription factors probably involved in the regulation of the expression of those clusters. The chain is Malformin synthetase mlfA from Aspergillus brasiliensis (strain CBS 101740 / IMI 381727 / IBT 21946).